The following is an 818-amino-acid chain: Protocadherin beta-1 (818 aa).

A signal peptide spans 1 to 28; the sequence is MAGTRRKSLQNRQVGSLLIFLCISVGDA. Residues 29-691 are Extracellular-facing; sequence TTIRYSVAEE…RKVNPSTKYL (663 aa). Cadherin domains follow at residues 35–133, 138–242, 243–347, 348–452, and 457–562; these read VAEE…APVF, PLLK…VPQF, SRLV…PPEV, MVSS…PPIF, and YILT…RPMI. 4 N-linked (GlcNAc...) asparagine glycosylation sites follow: Asn-169, Asn-209, Asn-257, and Asn-419. Residue Asn-568 is glycosylated (N-linked (GlcNAc...) asparagine). The region spanning 577–672 is the Cadherin 6 domain; the sequence is VPRSAEAGYL…LVDGFSEPYL (96 aa). A helical transmembrane segment spans residues 692–712; the sequence is VISLVILSFLFLLSVIVIFII. At 713 to 818 the chain is on the cytoplasmic side; sequence HVYQKIKYRE…GHDQVSDDYM (106 aa). The tract at residues 789 to 818 is disordered; sequence MEAGSSLPPNSDRNKSQRLEGHDQVSDDYM. The segment covering 800-818 has biased composition (basic and acidic residues); that stretch reads DRNKSQRLEGHDQVSDDYM.

It is found in the cell membrane. Potential calcium-dependent cell-adhesion protein. May be involved in the establishment and maintenance of specific neuronal connections in the brain. The sequence is that of Protocadherin beta-1 (PCDHB1) from Homo sapiens (Human).